A 250-amino-acid polypeptide reads, in one-letter code: Large ribosomal subunit protein uL29m (250 aa).

Residue Lys-144 is modified to N6-acetyllysine.

This sequence belongs to the universal ribosomal protein uL29 family. Component of the mitochondrial large ribosomal subunit (mt-LSU). Mature mammalian 55S mitochondrial ribosomes consist of a small (28S) and a large (39S) subunit. The 28S small subunit contains a 12S ribosomal RNA (12S mt-rRNA) and 30 different proteins. The 39S large subunit contains a 16S rRNA (16S mt-rRNA), a copy of mitochondrial valine transfer RNA (mt-tRNA(Val)), which plays an integral structural role, and 52 different proteins.

It localises to the mitochondrion. The chain is Large ribosomal subunit protein uL29m (MRPL47) from Homo sapiens (Human).